A 381-amino-acid polypeptide reads, in one-letter code: Cobalt-precorrin-5B C(1)-methyltransferase (381 aa).

This sequence belongs to the CbiD family.

The enzyme catalyses Co-precorrin-5B + S-adenosyl-L-methionine = Co-precorrin-6A + S-adenosyl-L-homocysteine. Its pathway is cofactor biosynthesis; adenosylcobalamin biosynthesis; cob(II)yrinate a,c-diamide from sirohydrochlorin (anaerobic route): step 6/10. In terms of biological role, catalyzes the methylation of C-1 in cobalt-precorrin-5B to form cobalt-precorrin-6A. The polypeptide is Cobalt-precorrin-5B C(1)-methyltransferase (Prochlorococcus marinus (strain NATL1A)).